Consider the following 669-residue polypeptide: Dymeclin (669 aa).

Residue glycine 2 is the site of N-myristoyl glycine attachment.

This sequence belongs to the dymeclin family. Myristoylated in vitro; myristoylation is not essential for protein targeting to Golgi compartment.

It is found in the cytoplasm. It localises to the golgi apparatus. Functionally, necessary for correct organization of Golgi apparatus. The chain is Dymeclin (dym) from Xenopus laevis (African clawed frog).